The primary structure comprises 149 residues: Large ribosomal subunit protein bL9 (149 aa).

This sequence belongs to the bacterial ribosomal protein bL9 family.

Binds to the 23S rRNA. In Thermotoga maritima (strain ATCC 43589 / DSM 3109 / JCM 10099 / NBRC 100826 / MSB8), this protein is Large ribosomal subunit protein bL9.